Here is a 312-residue protein sequence, read N- to C-terminus: Pollen allergen Phl p 5.0101 (312 aa).

The N-terminal stretch at 1 to 25 is a signal peptide; it reads MAVHQYTVALFLAVALVAGPAASYA.

Belongs to the Poa p IX/Phl p VI allergen family.

The protein resides in the secreted. The chain is Pollen allergen Phl p 5.0101 from Phleum pratense (Common timothy).